The sequence spans 272 residues: uncharacterized protein (272 aa).

The protein belongs to the sodium:galactoside symporter (TC 2.A.2) family.

This is an uncharacterized protein from Pseudescherichia vulneris (Escherichia vulneris).